The following is a 591-amino-acid chain: 4-coumarate--CoA ligase-like 3 (591 aa).

The ATP site is built by Ser-228, Ser-229, Gly-230, Thr-231, Ser-232, and Lys-236. Residue Tyr-280 participates in (E)-4-coumaroyl-AMP binding. Arg-301 lines the CoA pocket. Positions 303 to 375 are SBD1; it reads DAGDAVAAIG…QAFPHVDFIQ (73 aa). 4 residues coordinate (E)-4-coumaroyl-AMP: Ala-353, Gln-375, Gly-376, and Thr-380. ATP is bound by residues Gln-375, Gly-376, Thr-380, Asp-459, and Arg-474. Residues 376–440 are SBD2; the sequence is GYGMTESTAV…LHGPGIMKGY (65 aa). Residues Lys-476 and Lys-480 each coordinate (E)-4-coumaroyl-AMP. CoA contacts are provided by Lys-482 and Gly-483. ATP is bound at residue Lys-565.

This sequence belongs to the ATP-dependent AMP-binding enzyme family. Mg(2+) is required as a cofactor.

It catalyses the reaction (E)-4-coumarate + ATP + CoA = (E)-4-coumaroyl-CoA + AMP + diphosphate. The catalysed reaction is (E)-4-coumarate + ATP + H(+) = (E)-4-coumaroyl-AMP + diphosphate. It carries out the reaction (E)-4-coumaroyl-AMP + CoA = (E)-4-coumaroyl-CoA + AMP + H(+). Carboxylate--CoA ligase that may use 4-coumarate as substrate. Follows a two-step reaction mechanism, wherein the carboxylate substrate first undergoes adenylation by ATP, followed by a thioesterification in the presence of CoA to yield the final CoA thioester. The polypeptide is 4-coumarate--CoA ligase-like 3 (4CLL3) (Oryza sativa subsp. japonica (Rice)).